We begin with the raw amino-acid sequence, 351 residues long: Transcriptional activator POG1 (351 aa).

The segment covering 1 to 27 (MKQEPHRQSEEKEKPKGPMAVEREHHT) has biased composition (basic and acidic residues). A disordered region spans residues 1–56 (MKQEPHRQSEEKEKPKGPMAVEREHHTSLSSGTTMTASTGDESTNSRPVESSQTEK). Positions 28-56 (SLSSGTTMTASTGDESTNSRPVESSQTEK) are enriched in polar residues. 2 positions are modified to phosphoserine: S152 and S168. Disordered regions lie at residues 237-256 (GPQA…TPVM) and 280-351 (SMGP…PPPT). Polar residues-rich tracts occupy residues 241–256 (QLPT…TPVM) and 287–296 (IYGQQHQPQP). A Phosphoserine modification is found at S314.

It belongs to the POG1 family. Phosphorylated by CDC28.

It localises to the nucleus. In terms of biological role, transcriptional activator which promotes cell cycle recovery with CLN2, after pheromone induced G1 arrest, probably inhibiting the ability of STE20 to activate the pheromone response pathway. Binds the promoters of genes that function in cell cycle regulation, cytoskeletal organization, and spindle assembly. May also be involved in stress-resistance. This is Transcriptional activator POG1 (POG1) from Saccharomyces cerevisiae (strain YJM789) (Baker's yeast).